The chain runs to 249 residues: Cysteine desulfuration protein SufE (249 aa).

Residue Cys154 is the Cysteine persulfide intermediate of the active site.

The protein belongs to the SufE family. In terms of assembly, monomer. Interacts with SufS; interaction enhances cysteine desulfurase activity of SufS. Post-translationally, proteolytically cleaved.

The protein resides in the plastid. The protein localises to the apicoplast. The protein operates within cofactor biosynthesis; iron-sulfur cluster biosynthesis. Its function is as follows. Participates in sulfur mobilization (SUF) pathway for iron-sulfur (Fe-S) cluster biogenesis. Enhances cysteine desulfurase activity of SufS. Probably functions as a sulfur acceptor for SufS. The protein is Cysteine desulfuration protein SufE of Plasmodium falciparum (isolate 3D7).